A 181-amino-acid polypeptide reads, in one-letter code: Adenylyl-sulfate kinase (181 aa).

13 to 20 contacts ATP; the sequence is GVSGAGKS. S87 (phosphoserine intermediate) is an active-site residue.

It belongs to the APS kinase family.

The enzyme catalyses adenosine 5'-phosphosulfate + ATP = 3'-phosphoadenylyl sulfate + ADP + H(+). It participates in sulfur metabolism; hydrogen sulfide biosynthesis; sulfite from sulfate: step 2/3. Functionally, catalyzes the synthesis of activated sulfate. The chain is Adenylyl-sulfate kinase from Burkholderia ambifaria (strain ATCC BAA-244 / DSM 16087 / CCUG 44356 / LMG 19182 / AMMD) (Burkholderia cepacia (strain AMMD)).